The sequence spans 451 residues: Phosphoglucosamine mutase (451 aa).

The active-site Phosphoserine intermediate is the Ser-107. Residues Ser-107, Asp-246, Asp-248, and Asp-250 each coordinate Mg(2+). The residue at position 107 (Ser-107) is a Phosphoserine.

The protein belongs to the phosphohexose mutase family. It depends on Mg(2+) as a cofactor. Activated by phosphorylation.

It catalyses the reaction alpha-D-glucosamine 1-phosphate = D-glucosamine 6-phosphate. Functionally, catalyzes the conversion of glucosamine-6-phosphate to glucosamine-1-phosphate. This Burkholderia ambifaria (strain ATCC BAA-244 / DSM 16087 / CCUG 44356 / LMG 19182 / AMMD) (Burkholderia cepacia (strain AMMD)) protein is Phosphoglucosamine mutase.